The sequence spans 1204 residues: Bromodomain and PHD finger-containing protein 3 (1204 aa).

2 disordered regions span residues M1–P27 and S76–Q127. The segment covering K89 to R99 has biased composition (basic residues). The segment at D212–S262 adopts a PHD-type 1 zinc-finger fold. Residues P266–V299 form a C2HC pre-PHD-type zinc finger. A PHD-type 2 zinc finger spans residues L323–S387. The disordered stretch occupies residues A393–E464. S399 and S402 each carry phosphoserine. Residues G417–Q429 show a composition bias toward acidic residues. Over residues V442–I454 the composition is skewed to basic residues. An N6-acetyllysine mark is found at K445, K447, and K670. Positions L588–A692 constitute a Bromo domain. S712 and S739 each carry phosphoserine. A disordered region spans residues R778–E879. Over residues Q816–R826 the composition is skewed to acidic residues. Phosphoserine is present on residues S899, S961, and S964. A disordered region spans residues I903 to L1015. Residues S979–Q990 are compositionally biased toward basic and acidic residues. A PWWP domain is found at P1075–E1158.

As to quaternary structure, component of some HBO1 complexes composed of KAT7/HBO1, MEAF6, ING4 or ING5, and BRPF3. Component of the MOZ/MORF complex composed at least of ING5, KAT6A, KAT6B, MEAF6 and one of BRPF1, BRD1/BRPF2 and BRPF3. Interacts with KAT7/HBO1; the interaction is direct. In terms of tissue distribution, highly expressed in the adult testis and brain.

The protein localises to the nucleus. Its function is as follows. Scaffold subunit of various histone acetyltransferase (HAT) complexes, such as the MOZ/MORF and HBO1 complexes, which have a histone H3 acetyltransferase activity. Plays a role in DNA replication initiation by directing KAT7/HBO1 specificity towards histone H3 'Lys-14' acetylation (H3K14ac), thereby facilitating the activation of replication origins. Component of the MOZ/MORF complex which has a histone H3 acetyltransferase activity. The sequence is that of Bromodomain and PHD finger-containing protein 3 from Mus musculus (Mouse).